The primary structure comprises 151 residues: MGRMHAPGKGLSSSALPYRRSVPTWLKLSSEDVKEQIYKLAKKGLRPSQIGVILRDSHGXAQVRFVTGNQILRVLKAKGLAPDLPEDIYHLIKKAVAMRKHLERNRKDTDSKFRLILVESRIHRLGRYYKTKGVLPPNWKYESATASALVA.

It belongs to the universal ribosomal protein uS15 family.

The protein is Small ribosomal subunit protein uS15 (RPS13) of Ciona intestinalis (Transparent sea squirt).